The chain runs to 62 residues: Sperm protamine P1 (62 aa).

The disordered stretch occupies residues 1 to 46; it reads MARCRRHSRSRSRSRNQCQRRRRRHYNRRRTYRRSRRHSRRRRVRR.

It belongs to the protamine P1 family. Testis.

It localises to the nucleus. The protein localises to the chromosome. Protamines substitute for histones in the chromatin of sperm during the haploid phase of spermatogenesis. They compact sperm DNA into a highly condensed, stable and inactive complex. The sequence is that of Sperm protamine P1 (PRM1) from Planigale gilesi (Flat-skulled marsupial mouse).